Consider the following 548-residue polypeptide: Membrane protein insertase YidC (548 aa).

Residues 6–26 form a helical membrane-spanning segment; sequence NLLVIALLFVSFMIWQAWEQD. Residues 28–56 are disordered; the sequence is NPQPQTQQTTQTTTTAAGSAADQGVPASG. Positions 29–42 are enriched in low complexity; that stretch reads PQPQTQQTTQTTTT. A run of 4 helical transmembrane segments spans residues 350–370, 424–444, 458–478, and 499–519; these read FVGN…GIMY, FPLI…MGSI, LSAQ…MFFI, and PVIF…YYIV.

It belongs to the OXA1/ALB3/YidC family. Type 1 subfamily. In terms of assembly, interacts with the Sec translocase complex via SecD. Specifically interacts with transmembrane segments of nascent integral membrane proteins during membrane integration.

Its subcellular location is the cell inner membrane. Required for the insertion and/or proper folding and/or complex formation of integral membrane proteins into the membrane. Involved in integration of membrane proteins that insert both dependently and independently of the Sec translocase complex, as well as at least some lipoproteins. Aids folding of multispanning membrane proteins. The sequence is that of Membrane protein insertase YidC from Salmonella agona (strain SL483).